A 91-amino-acid polypeptide reads, in one-letter code: Small ribosomal subunit protein uS19 (91 aa).

The protein belongs to the universal ribosomal protein uS19 family.

Protein S19 forms a complex with S13 that binds strongly to the 16S ribosomal RNA. This chain is Small ribosomal subunit protein uS19, found in Opitutus terrae (strain DSM 11246 / JCM 15787 / PB90-1).